Consider the following 436-residue polypeptide: Divalent metal cation transporter MntH (436 aa).

Positions 1–22 (MDSRSPSLPDDRPDPPEQHLDA) are enriched in basic and acidic residues. The tract at residues 1–31 (MDSRSPSLPDDRPDPPEQHLDARAGATLRGT) is disordered. 11 helical membrane passes run 40–60 (ILPF…PGNF), 71–91 (GYSL…IQNL), 115–135 (LVWF…LAEF), 144–164 (LLTG…TFWL), 177–197 (LAVG…VVLA), 216–236 (GSAY…VIYL), 264–284 (VIAA…VAAA), 304–324 (LTPL…LASG), 354–374 (LITM…SSVL), 375–395 (ILSQ…LLLF), and 411–431 (FTVI…YLLW).

The protein belongs to the NRAMP family.

Its subcellular location is the cell membrane. Its function is as follows. H(+)-stimulated, divalent metal cation uptake system. In Deinococcus radiodurans (strain ATCC 13939 / DSM 20539 / JCM 16871 / CCUG 27074 / LMG 4051 / NBRC 15346 / NCIMB 9279 / VKM B-1422 / R1), this protein is Divalent metal cation transporter MntH.